The sequence spans 94 residues: Sucrose operon repressor (94 aa).

Residues 1 to 56 (MASLHDVARLAGVSKSTVSRVINDEYGVKEATKQKVRQAVAECGYVPNQVAKDLKE) form the HTH lacI-type domain. The H-T-H motif DNA-binding region spans 4–23 (LHDVARLAGVSKSTVSRVIN).

Its function is as follows. Repressor for the scr operon. Binds D-fructose as an inducer. This is Sucrose operon repressor (scrR) from Vibrio alginolyticus.